Consider the following 193-residue polypeptide: Chaperone protein TorD (193 aa).

Belongs to the TorD/DmsD family. TorD subfamily.

It localises to the cytoplasm. In terms of biological role, involved in the biogenesis of TorA. Acts on TorA before the insertion of the molybdenum cofactor and, as a result, probably favors a conformation of the apoenzyme that is competent for acquiring the cofactor. The chain is Chaperone protein TorD from Actinobacillus succinogenes (strain ATCC 55618 / DSM 22257 / CCUG 43843 / 130Z).